A 252-amino-acid polypeptide reads, in one-letter code: 5'-nucleotidase SurE (252 aa).

Aspartate 8, aspartate 9, serine 39, and asparagine 91 together coordinate a divalent metal cation.

The protein belongs to the SurE nucleotidase family. A divalent metal cation is required as a cofactor.

The protein resides in the cytoplasm. The enzyme catalyses a ribonucleoside 5'-phosphate + H2O = a ribonucleoside + phosphate. Functionally, nucleotidase that shows phosphatase activity on nucleoside 5'-monophosphates. The chain is 5'-nucleotidase SurE from Bordetella pertussis (strain Tohama I / ATCC BAA-589 / NCTC 13251).